The sequence spans 487 residues: NADH-quinone oxidoreductase subunit N (487 aa).

A run of 13 helical transmembrane segments spans residues 18-38 (LVPE…DLFV), 44-64 (VWTH…LATG), 84-104 (VMKT…WTYL), 116-136 (VLVL…SLLM), 169-189 (FVLG…VYGA), 211-231 (LLTG…AAPF), 242-262 (APAP…FGMA), 277-297 (WHLL…LMAI), 305-325 (MLAY…AGGG), 333-353 (MFYA…IIAL), 377-397 (AGLV…LGFW), 410-430 (DMLW…YYYL), and 457-477 (VLGV…PIMV).

The protein belongs to the complex I subunit 2 family. In terms of assembly, NDH-1 is composed of 14 different subunits. Subunits NuoA, H, J, K, L, M, N constitute the membrane sector of the complex.

Its subcellular location is the cell inner membrane. The catalysed reaction is a quinone + NADH + 5 H(+)(in) = a quinol + NAD(+) + 4 H(+)(out). Its function is as follows. NDH-1 shuttles electrons from NADH, via FMN and iron-sulfur (Fe-S) centers, to quinones in the respiratory chain. The immediate electron acceptor for the enzyme in this species is believed to be ubiquinone. Couples the redox reaction to proton translocation (for every two electrons transferred, four hydrogen ions are translocated across the cytoplasmic membrane), and thus conserves the redox energy in a proton gradient. The protein is NADH-quinone oxidoreductase subunit N of Xanthomonas euvesicatoria pv. vesicatoria (strain 85-10) (Xanthomonas campestris pv. vesicatoria).